The primary structure comprises 272 residues: Probable proteasome subunit alpha type-6 (272 aa).

Residues A243–A261 are compositionally biased toward low complexity. Positions A243–D272 are disordered.

The protein belongs to the peptidase T1A family. In terms of assembly, the 26S proteasome consists of a 20S proteasome core and two 19S regulatory subunits. The 20S proteasome core is composed of 28 subunits that are arranged in four stacked rings, resulting in a barrel-shaped structure. The two end rings are each formed by seven alpha subunits, and the two central rings are each formed by seven beta subunits. The catalytic chamber with the active sites is on the inside of the barrel.

Its subcellular location is the cytoplasm. The protein resides in the nucleus. Its function is as follows. The proteasome is a multicatalytic proteinase complex which is characterized by its ability to cleave peptides with Arg, Phe, Tyr, Leu, and Glu adjacent to the leaving group at neutral or slightly basic pH. The proteasome has an ATP-dependent proteolytic activity. The polypeptide is Probable proteasome subunit alpha type-6 (Schizosaccharomyces pombe (strain 972 / ATCC 24843) (Fission yeast)).